The primary structure comprises 286 residues: D-tagatose-1,6-bisphosphate aldolase subunit KbaY (286 aa).

Catalysis depends on Asp-82, which acts as the Proton donor. Residues His-83 and His-180 each contribute to the Zn(2+) site. Gly-181 contributes to the dihydroxyacetone phosphate binding site. Zn(2+) is bound at residue His-208. Dihydroxyacetone phosphate contacts are provided by residues 209-211 and 230-233; these read GAS and NVAT.

Belongs to the class II fructose-bisphosphate aldolase family. TagBP aldolase KbaY subfamily. In terms of assembly, homotetramer. Forms a complex with KbaZ. Zn(2+) is required as a cofactor.

The catalysed reaction is D-tagatofuranose 1,6-bisphosphate = D-glyceraldehyde 3-phosphate + dihydroxyacetone phosphate. It participates in carbohydrate metabolism; D-tagatose 6-phosphate degradation; D-glyceraldehyde 3-phosphate and glycerone phosphate from D-tagatose 6-phosphate: step 2/2. In terms of biological role, catalytic subunit of the tagatose-1,6-bisphosphate aldolase KbaYZ, which catalyzes the reversible aldol condensation of dihydroxyacetone phosphate (DHAP or glycerone-phosphate) with glyceraldehyde 3-phosphate (G3P) to produce tagatose 1,6-bisphosphate (TBP). Requires KbaZ subunit for full activity and stability. This chain is D-tagatose-1,6-bisphosphate aldolase subunit KbaY, found in Escherichia coli O17:K52:H18 (strain UMN026 / ExPEC).